The sequence spans 43 residues: Metallothionein-3 (43 aa).

This sequence belongs to the metallothionein superfamily. Type 5 family.

Functionally, this protein binds cations of several transition elements. Thought to be involved in metal ion homeostasis. The protein is Metallothionein-3 (MtnC) of Drosophila melanogaster (Fruit fly).